We begin with the raw amino-acid sequence, 202 residues long: Histone chaperone ASF1B (202 aa).

The interaction with histone H3 and CHAF1B stretch occupies residues 1–156 (MAKVSVLNVA…TRFHINWDNN (156 aa)). Ser198 is subject to Phosphoserine; by TLK2.

This sequence belongs to the ASF1 family. As to quaternary structure, interacts with histone H3 (via C-terminus), including histone H3.1, H3.2 and H3.3, and histone H4; the interaction with H3 is direct. Interacts with the CHAF1A, CHAF1B and RBBP4 subunits of the CAF-1 complex. Interacts with HAT1, NASP and TAF1. Found in a soluble complex with NASP and histones H3 and H4; the interaction with NASP is probably indirect and mediated by H3-H4. Interacts with CDAN1. Found in a cytosolic complex with CDAN1, ASF1A, IPO4 and histones H3.1 and H4. Interacts with CREBBP. In terms of processing, phosphorylated by TLK2. Phosphorylated by TLK1. As to expression, highly expressed in germ cells. Restricted to premeiotic to meiotic stages during spermatogenesis.

It localises to the nucleus. It is found in the cytoplasm. Its subcellular location is the cytosol. Its function is as follows. Histone chaperone that facilitates histone deposition and histone exchange and removal during nucleosome assembly and disassembly. Cooperates with chromatin assembly factor 1 (CAF-1) to promote replication-dependent chromatin assembly. Also involved in the nuclear import of the histone H3-H4 dimer together with importin-4 (IPO4): specifically recognizes and binds newly synthesized histones with the monomethylation of H3 'Lys-9' (H3K9me1) and diacetylation at 'Lys-5' and 'Lys-12' of H4 (H4K5ac and H4K12ac) marks in the cytosol. Does not participate in replication-independent nucleosome deposition which is mediated by ASF1A and HIRA. Required for gonad development. The polypeptide is Histone chaperone ASF1B (Mus musculus (Mouse)).